Consider the following 72-residue polypeptide: Large ribosomal subunit protein uL29 (72 aa).

This sequence belongs to the universal ribosomal protein uL29 family.

This Prochlorococcus marinus (strain MIT 9312) protein is Large ribosomal subunit protein uL29.